A 735-amino-acid polypeptide reads, in one-letter code: Ribosomal RNA large subunit methyltransferase K/L (735 aa).

Positions aspartate 45–leucine 156 constitute a THUMP domain.

This sequence belongs to the methyltransferase superfamily. RlmKL family.

It localises to the cytoplasm. The catalysed reaction is guanosine(2445) in 23S rRNA + S-adenosyl-L-methionine = N(2)-methylguanosine(2445) in 23S rRNA + S-adenosyl-L-homocysteine + H(+). It catalyses the reaction guanosine(2069) in 23S rRNA + S-adenosyl-L-methionine = N(2)-methylguanosine(2069) in 23S rRNA + S-adenosyl-L-homocysteine + H(+). Functionally, specifically methylates the guanine in position 2445 (m2G2445) and the guanine in position 2069 (m7G2069) of 23S rRNA. This Allochromatium vinosum (strain ATCC 17899 / DSM 180 / NBRC 103801 / NCIMB 10441 / D) (Chromatium vinosum) protein is Ribosomal RNA large subunit methyltransferase K/L.